The chain runs to 113 residues: Putative hemolysin E-like protein (113 aa).

The protein belongs to the hemolysin E family.

This Shigella flexneri protein is Putative hemolysin E-like protein.